The sequence spans 124 residues: Flowering-promoting factor 1-like protein 1 (124 aa).

A disordered region spans residues 19 to 42 (PYNQSAGDSSESSSSGGNQQQRMR). Positions 22–39 (QSAGDSSESSSSGGNQQQ) are enriched in low complexity.

This sequence belongs to the FPF1 family. In terms of tissue distribution, expressed in roots, flowers, and at a low level, in leaves.

Its function is as follows. Modulates the competence to flowering of apical meristems. The polypeptide is Flowering-promoting factor 1-like protein 1 (FLP1) (Arabidopsis thaliana (Mouse-ear cress)).